Consider the following 285-residue polypeptide: tRNA-cytidine(32) 2-sulfurtransferase (285 aa).

The PP-loop motif motif lies at 48–53; the sequence is SGGKDS. Cysteine 122, cysteine 125, and cysteine 213 together coordinate [4Fe-4S] cluster.

This sequence belongs to the TtcA family. In terms of assembly, homodimer. Mg(2+) serves as cofactor. It depends on [4Fe-4S] cluster as a cofactor.

The protein resides in the cytoplasm. The enzyme catalyses cytidine(32) in tRNA + S-sulfanyl-L-cysteinyl-[cysteine desulfurase] + AH2 + ATP = 2-thiocytidine(32) in tRNA + L-cysteinyl-[cysteine desulfurase] + A + AMP + diphosphate + H(+). The protein operates within tRNA modification. In terms of biological role, catalyzes the ATP-dependent 2-thiolation of cytidine in position 32 of tRNA, to form 2-thiocytidine (s(2)C32). The sulfur atoms are provided by the cysteine/cysteine desulfurase (IscS) system. The chain is tRNA-cytidine(32) 2-sulfurtransferase from Cytophaga hutchinsonii (strain ATCC 33406 / DSM 1761 / CIP 103989 / NBRC 15051 / NCIMB 9469 / D465).